The chain runs to 138 residues: Cysteine desulfuration protein SufE (138 aa).

Cysteine 51 functions as the Cysteine persulfide intermediate in the catalytic mechanism.

This sequence belongs to the SufE family. As to quaternary structure, homodimer. Interacts with SufS.

Its subcellular location is the cytoplasm. It functions in the pathway cofactor biosynthesis; iron-sulfur cluster biosynthesis. In terms of biological role, participates in cysteine desulfuration mediated by SufS. Cysteine desulfuration mobilizes sulfur from L-cysteine to yield L-alanine and constitutes an essential step in sulfur metabolism for biosynthesis of a variety of sulfur-containing biomolecules. Functions as a sulfur acceptor for SufS, by mediating the direct transfer of the sulfur atom from the S-sulfanylcysteine of SufS, an intermediate product of cysteine desulfuration process. The sequence is that of Cysteine desulfuration protein SufE from Escherichia coli O17:K52:H18 (strain UMN026 / ExPEC).